We begin with the raw amino-acid sequence, 313 residues long: Ribosomal RNA small subunit methyltransferase H (313 aa).

Residues 35–37 (GGH), Asp-55, Phe-79, Asp-101, and Gln-108 contribute to the S-adenosyl-L-methionine site.

It belongs to the methyltransferase superfamily. RsmH family.

It localises to the cytoplasm. It catalyses the reaction cytidine(1402) in 16S rRNA + S-adenosyl-L-methionine = N(4)-methylcytidine(1402) in 16S rRNA + S-adenosyl-L-homocysteine + H(+). In terms of biological role, specifically methylates the N4 position of cytidine in position 1402 (C1402) of 16S rRNA. This chain is Ribosomal RNA small subunit methyltransferase H, found in Salmonella arizonae (strain ATCC BAA-731 / CDC346-86 / RSK2980).